The chain runs to 262 residues: MTGPTEESAVATVADWPEGLAAVLRGAADQARAAVVEFSGPEAVGDYLGVSYEDGNAATHRFIAHLPGYQGWQWAVVVASYSGADHATISEVVLVPGPTALLAPDWVPWEQRVRPGDLSPGDLLAPAKDDPRLVPGYTASGDAQVDETAAEIGLGRRWVMSAWGRAQSAQRWHDGDYGPGSAMARSTKRVCRDCGFFLPLAGSLGAMFGVCGNELSADGHVVDRQYGCGAHSDTTAPAGGSTPIYEPYDDGVLDIIEKPAES.

This is an uncharacterized protein from Mycobacterium tuberculosis (strain CDC 1551 / Oshkosh).